Reading from the N-terminus, the 521-residue chain is Nitric oxide reductase transcription regulator NorR2 (521 aa).

Asp-56 is modified (4-aspartylphosphate). A Sigma-54 factor interaction domain is found at 193 to 422 (IIGQSEAIAN…LEHVISRAAL (230 aa)). ATP contacts are provided by residues 221–228 (GETGVGKE) and 293–302 (EVGELPLAIQ). The segment at residues 497 to 516 (WAQAARQLGIDASNLHKLAR) is a DNA-binding region (H-T-H motif).

Its pathway is nitrogen metabolism; nitrate reduction (denitrification) [regulation]. Required for the nitric oxide (NO) induced expression of NO reductase. Not required for expression of 2 other pathway members, nitrate reductase (nirS) and nitrous oxide reductase (nosZ). This Cupriavidus necator (strain ATCC 17699 / DSM 428 / KCTC 22496 / NCIMB 10442 / H16 / Stanier 337) (Ralstonia eutropha) protein is Nitric oxide reductase transcription regulator NorR2 (norR2).